The chain runs to 690 residues: Dual specificity protein kinase lkh1 (690 aa).

The segment at 39–70 (PNLPPPFSVHQLQSFVPPQPPSSSSPSTTGTV) is disordered. The 321-residue stretch at 362–682 (YTVVRLLGHG…AKEALWHPFF (321 aa)) folds into the Protein kinase domain. ATP is bound by residues 368 to 376 (LGHGTFGKV) and K391. D488 (proton acceptor) is an active-site residue.

It belongs to the protein kinase superfamily. CMGC Ser/Thr protein kinase family. Lammer subfamily. Post-translationally, autophosphorylates on all three types of residues.

It carries out the reaction L-seryl-[protein] + ATP = O-phospho-L-seryl-[protein] + ADP + H(+). The enzyme catalyses L-threonyl-[protein] + ATP = O-phospho-L-threonyl-[protein] + ADP + H(+). It catalyses the reaction L-tyrosyl-[protein] + ATP = O-phospho-L-tyrosyl-[protein] + ADP + H(+). Its function is as follows. Protein kinase that may act as a negative regulator of filamentous growth and flocculation. Appears to have a role in normal cell wall and septum formation and in cell separation. May have antagonistic function in the regulation of beta-glucan distribution between the sites for cell wall and septum assembly. The chain is Dual specificity protein kinase lkh1 (lkh1) from Schizosaccharomyces pombe (strain 972 / ATCC 24843) (Fission yeast).